An 83-amino-acid chain; its full sequence is EAPANAVTMDDPTAQALKYHPSAADSDRVAAARPGLPPEEQHCANCNFMQADVGEGDYKGCQLFPGKLINVNGWCASWTLKAG.

[4Fe-4S] cluster-binding residues include C43, C46, C61, and C75.

The protein belongs to the high-potential iron-sulfur protein (HiPIP) family. In terms of assembly, homodimer.

It localises to the periplasm. Specific class of high-redox-potential 4Fe-4S ferredoxins. Functions in anaerobic electron transport in most purple and in some other photosynthetic bacteria and in at least one genus (Paracoccus) of halophilic, denitrifying bacteria. This is High-potential iron-sulfur protein from Thiocystis violacea.